Consider the following 355-residue polypeptide: Elongation factor Ts (355 aa).

The segment at 82–85 (TDFV) is involved in Mg(2+) ion dislocation from EF-Tu.

It belongs to the EF-Ts family.

Its subcellular location is the cytoplasm. Functionally, associates with the EF-Tu.GDP complex and induces the exchange of GDP to GTP. It remains bound to the aminoacyl-tRNA.EF-Tu.GTP complex up to the GTP hydrolysis stage on the ribosome. The polypeptide is Elongation factor Ts (tsf) (Helicobacter pylori (strain J99 / ATCC 700824) (Campylobacter pylori J99)).